Reading from the N-terminus, the 183-residue chain is Capsid protein (183 aa).

The tract at residues 136–183 is disordered; the sequence is NAPILSTLPETTVVRRRGRSPRRRTPSPRRRRSQSPRRRRSQSPASQC. Residues 149–176 show a composition bias toward basic residues; sequence VRRRGRSPRRRTPSPRRRRSQSPRRRRS. A phosphoserine; by host mark is found at serine 155, serine 162, and serine 170. A 1; half-length repeat occupies 155–161; the sequence is SPRRRTP. The 3 X 8 AA repeats of S-P-R-R-R-[PR]-S-Q stretch occupies residues 155–177; that stretch reads SPRRRTPSPRRRRSQSPRRRRSQ. The Bipartite nuclear localization signal motif lies at 158-175; it reads RRTPSPRRRRSQSPRRRR. A run of 2 repeats spans residues 162-169 and 170-177. The tract at residues 177 to 183 is RNA binding; sequence QSPASQC.

It belongs to the orthohepadnavirus core antigen family. Homodimerizes, then multimerizes. Interacts with cytosol exposed regions of viral L glycoprotein present in the reticulum-to-Golgi compartment. Interacts with human FLNB. Phosphorylated form interacts with host importin alpha; this interaction depends on the exposure of the NLS, which itself depends upon genome maturation and/or phosphorylation of the capsid protein. Interacts with host NUP153. In terms of processing, phosphorylated by host SRPK1, SRPK2, and maybe protein kinase C or GAPDH. Phosphorylation is critical for pregenomic RNA packaging. Protein kinase C phosphorylation is stimulated by HBx protein and may play a role in transport of the viral genome to the nucleus at the late step during the viral replication cycle.

It is found in the virion. It localises to the host cytoplasm. Functionally, self assembles to form an icosahedral capsid. Most capsids appear to be large particles with an icosahedral symmetry of T=4 and consist of 240 copies of capsid protein, though a fraction forms smaller T=3 particles consisting of 180 capsid proteins. Entering capsids are transported along microtubules to the nucleus. Phosphorylation of the capsid is thought to induce exposure of nuclear localization signal in the C-terminal portion of the capsid protein that allows binding to the nuclear pore complex via the importin (karyopherin-) alpha and beta. Capsids are imported in intact form through the nuclear pore into the nuclear basket, where it probably binds NUP153. Only capsids that contain the mature viral genome can release the viral DNA and capsid protein into the nucleoplasm. Immature capsids get stuck in the basket. Capsids encapsulate the pre-genomic RNA and the P protein. Pre-genomic RNA is reverse-transcribed into DNA while the capsid is still in the cytoplasm. The capsid can then either be directed to the nucleus, providing more genomes for transcription, or bud through the endoplasmic reticulum to provide new virions. This Hylobatidae (gibbons) protein is Capsid protein.